The sequence spans 111 residues: Thiosulfate sulfurtransferase GlpE (111 aa).

Residues 16–104 form the Rhodanese domain; the sequence is QTENAVLLDV…WQRAGLPMET (89 aa). The active-site Cysteine persulfide intermediate is Cys64.

The protein belongs to the GlpE family.

Its subcellular location is the cytoplasm. It catalyses the reaction thiosulfate + hydrogen cyanide = thiocyanate + sulfite + 2 H(+). The catalysed reaction is thiosulfate + [thioredoxin]-dithiol = [thioredoxin]-disulfide + hydrogen sulfide + sulfite + 2 H(+). Transferase that catalyzes the transfer of sulfur from thiosulfate to thiophilic acceptors such as cyanide or dithiols. May function in a CysM-independent thiosulfate assimilation pathway by catalyzing the conversion of thiosulfate to sulfite, which can then be used for L-cysteine biosynthesis. This is Thiosulfate sulfurtransferase GlpE from Actinobacillus succinogenes (strain ATCC 55618 / DSM 22257 / CCUG 43843 / 130Z).